Reading from the N-terminus, the 382-residue chain is GDP-mannose-dependent alpha-(1-6)-phosphatidylinositol monomannoside mannosyltransferase (382 aa).

GDP-alpha-D-mannose-binding residues include Arg200, Lys205, Ile257, and Glu294.

It belongs to the glycosyltransferase group 1 family. Glycosyltransferase 4 subfamily.

It catalyses the reaction a 1,2-diacyl-sn-glycero-3-phospho-[alpha-D-mannopyranosyl-(1&lt;-&gt;6)-D-myo-inositol] + GDP-alpha-D-mannose = a 2,6-O-bis(alpha-D-mannopyranosyl)-1-phosphatidyl-1D-myo-inositol + GDP + H(+). It carries out the reaction a 1,2-diacyl-sn-glycero-3-phospho-[alpha-D-6-acyl-mannopyranosyl-(1&lt;-&gt;6)-D-myo-inositol] + GDP-alpha-D-mannose = a 2-O-(alpha-D-mannosyl)-6-O-(6-O-acyl-alpha-D-mannosyl)-1-phosphatidyl-1D-myo-inositol + GDP + H(+). Its pathway is phospholipid metabolism; phosphatidylinositol metabolism. Its function is as follows. Involved in the biosynthesis of phosphatidyl-myo-inositol mannosides (PIM) which are early precursors in the biosynthesis of lipomannans (LM) and lipoarabinomannans (LAM). Catalyzes the addition of a mannosyl residue from GDP-D-mannose (GDP-Man) to the position 6 of a phosphatidyl-myo-inositol bearing an alpha-1,2-linked mannose residue (PIM1) to generate phosphatidyl-myo-inositol bearing alpha-1,2- and alpha-1,6-linked mannose residues (Ac1PIM2). PimB also catalyzes the addition of a mannosyl residue from GDP-Man to the position 6 of phosphatidyl-myo-inositol bearing an acylated alpha-1,2-linked mannose residue (Ac1PIM1) to generate monoacylated phosphatidyl-myo-inositol bearing alpha-1,2- and alpha-1,6-linked mannose residues (Ac1PIM2). The addition of the second mannosyl residue by PimB preferentially occurs before the acylation of the mannosyl residue transferred by PimA. Also able to transfer a mannosyl residue from GDP-Man to the position 6 of a phosphatidyl-myo-inositol (PI), but this reaction is very slow. This is GDP-mannose-dependent alpha-(1-6)-phosphatidylinositol monomannoside mannosyltransferase from Mycolicibacterium smegmatis (strain ATCC 700084 / mc(2)155) (Mycobacterium smegmatis).